A 552-amino-acid chain; its full sequence is Cochlin (552 aa).

The N-terminal stretch at 1-26 is a signal peptide; it reads MPSSRIPALCLGAWLLLLLLPRFARA. In terms of domain architecture, LCCL spans 30–123; sequence VPIPVTCFTR…QMLSRWSASF (94 aa). 2 cysteine pairs are disulfide-bonded: Cys-36/Cys-52 and Cys-56/Cys-76. An N-linked (GlcNAc...) asparagine glycan is attached at Asn-102. The tract at residues 129–161 is disordered; that stretch reads KSSTQEATGRAVSTAHPPSGKRLKKTPEKKTGN. 2 consecutive VWFA domains span residues 167–352 and 369–539; these read DIAF…VQKL and NIAF…VSDV. A glycan (N-linked (GlcNAc...) asparagine) is linked at Asn-223.

As to quaternary structure, monomer. May form homodimer. Interacts with type II collagen. Interacts with SLC44A2. Interacts with ANXA2. In terms of processing, N-glycosylated. As to expression, expressed in inner ear structures.

Its subcellular location is the secreted. The protein localises to the extracellular space. Plays a role in the control of cell shape and motility in the trabecular meshwork. This Mus musculus (Mouse) protein is Cochlin (Coch).